The primary structure comprises 350 residues: Ribonuclease H2 subunit B (350 aa).

Positions 134 to 151 (QDYSNSSDTGENQKSNSK) are enriched in polar residues. Residues 134 to 153 (QDYSNSSDTGENQKSNSKTN) form a disordered region.

This sequence belongs to the RNase H2 subunit B family. Highly divergent. In terms of assembly, the RNase 2 complex is a heterotrimer composed of the catalytic subunit RNH201 and of the non-catalytic subunits RNH202 and RNH203.

It localises to the nucleus. In terms of biological role, non catalytic subunit of RNase H2, an endonuclease that specifically degrades the RNA of RNA:DNA hybrids. Participates in DNA replication, possibly by mediating the removal of lagging-strand Okazaki fragment RNA primers during DNA replication. Mediates the excision of single ribonucleotides from DNA:RNA duplexes. In Saccharomyces cerevisiae (strain ATCC 204508 / S288c) (Baker's yeast), this protein is Ribonuclease H2 subunit B (RNH202).